Reading from the N-terminus, the 484-residue chain is Poly(A) RNA polymerase GLD2 (484 aa).

Ser62 and Ser69 each carry phosphoserine. Residues 76–92 (KRLSDEKNLPLDGKRQR) carry the Nuclear localization signal motif. Residue Ser95 is modified to Phosphoserine. Mg(2+) contacts are provided by Asp213 and Asp215. The PAP-associated domain occupies 386 to 440 (NLGDLLLGFLKYYATEFDWNSQMISVREAKAIPRPDGIEWRNKYICVEEPFDGTN).

Belongs to the DNA polymerase type-B-like family. GLD2 subfamily. Interacts with CPEB1, CPEB2, CPSF1 and PABPC1. Interacts with QKI isoform QKI7; promoting recruitment to miRNA miR-122 and miR-122 stabilization. It depends on Mg(2+) as a cofactor. Mn(2+) is required as a cofactor.

Its subcellular location is the cytoplasm. The protein localises to the nucleus. The enzyme catalyses RNA(n) + ATP = RNA(n)-3'-adenine ribonucleotide + diphosphate. Cytoplasmic poly(A) RNA polymerase that adds successive AMP monomers to the 3'-end of specific RNAs, forming a poly(A) tail. In contrast to the canonical nuclear poly(A) RNA polymerase, it only adds poly(A) to selected cytoplasmic mRNAs. Does not play a role in replication-dependent histone mRNA degradation. Adds a single nucleotide to the 3' end of specific miRNAs, monoadenylation stabilizes and prolongs the activity of some but not all miRNAs. The sequence is that of Poly(A) RNA polymerase GLD2 from Bos taurus (Bovine).